The sequence spans 61 residues: Large ribosomal subunit protein uL30 (61 aa).

This sequence belongs to the universal ribosomal protein uL30 family. Part of the 50S ribosomal subunit.

This Corynebacterium glutamicum (strain R) protein is Large ribosomal subunit protein uL30.